A 729-amino-acid polypeptide reads, in one-letter code: Phenylalanine ammonia-lyase (729 aa).

Tyr77 (proton donor/acceptor) is an active-site residue. The 5-imidazolinone (Ala-Gly) cross-link spans 182–184; sequence ASG. Position 183 is a 2,3-didehydroalanine (Ser) (Ser183). (E)-cinnamate-binding residues include Asn241, Gln336, Arg342, Asn372, Lys443, Glu471, and Asn474.

Belongs to the PAL/histidase family. Post-translationally, contains an active site 4-methylidene-imidazol-5-one (MIO), which is formed autocatalytically by cyclization and dehydration of residues Ala-Ser-Gly.

It is found in the cytoplasm. The enzyme catalyses L-phenylalanine = (E)-cinnamate + NH4(+). It participates in secondary metabolite biosynthesis. Its pathway is phenylpropanoid metabolism; trans-cinnamate biosynthesis; trans-cinnamate from L-phenylalanine: step 1/1. Functionally, phenylalanine ammonia-lyase; part of the gene cluster that mediates the biosynthesis of squalestatin S1 (SQS1, also known as zaragozic acid A), a heavily oxidized fungal polyketide that offers potent cholesterol lowering activity by targeting squalene synthase (SS). SQS1 is composed of a 2,8-dioxobicyclic[3.2.1]octane-3,4,5-tricarboxyclic acid core that is connected to two lipophilic polyketide arms. These initial steps feature the priming of an unusual benzoic acid starter unit onto the highly reducing polyketide synthase pks2, followed by oxaloacetate extension and product release to generate a tricarboxylic acid containing product. The phenylalanine ammonia lyase (PAL) M7 and the acyl-CoA ligase M9 are involved in transforming phenylalanine into benzoyl-CoA. The citrate synthase-like protein R3 is involved in connecting the C-alpha-carbons of the hexaketide chain and oxaloacetate to afford the tricarboxylic acid unit. The potential hydrolytic enzymes, M8 and M10, are in close proximity to pks2 and may participate in product release. On the other side, the tetraketide arm is synthesized by a the squalestatin tetraketide synthase pks1 and enzymatically esterified to the core in the last biosynthetic step, by the acetyltransferase M4. The biosynthesis of the tetraketide must involve 3 rounds of chain extension. After the first and second rounds methyl-transfer occurs, and in all rounds of extension the ketoreductase and dehydratase are active. The enoyl reductase and C-MeT of pks1 are not active in the final round of extension. The acetyltransferase M4 appears to have a broad substrate selectivity for its acyl CoA substrate, allowing the in vitro synthesis of novel squalestatins. The biosynthesis of SQS1 requires several oxidative steps likely performed by oxidoreductases M1, R1 and R2. Finally, in support of the identification of the cluster as being responsible for SQS1 production, the cluster contains a gene encoding a putative squalene synthase (SS) R6, suggesting a likely mechanism for self-resistance. The sequence is that of Phenylalanine ammonia-lyase from Phoma sp. (strain ATCC 20986 / MF5453).